A 97-amino-acid chain; its full sequence is Mapk-regulated corepressor-interacting protein 1 (97 aa).

Residues 1 to 30 (MTSSPVSRVVYNGKRTSSPRSPPSSSEIFT) are disordered. Residues serine 21 and serine 24 each carry the phosphoserine modification. Phosphothreonine is present on threonine 30. Phosphotyrosine is present on tyrosine 41. Lysine 79 bears the N6-acetyllysine mark. Residues 80–84 (PIDLS) carry the PXDLS motif motif.

The protein belongs to the MCRIP family. As to quaternary structure, interacts (unphosphorylated form, via the PXDLS motif) with CTBP1, competitively inhibiting CTBP-ZEB1 interaction. Interacts with CTBP2. Interacts with MCRIP2. Interacts with DDX6. Post-translationally, phosphorylation by MAPK3/1 (ERK1/2) regulates MCRIP1 binding to CTBP(s).

It is found in the nucleus. The protein resides in the cytoplasm. The protein localises to the stress granule. Functionally, the phosphorylation status of MCRIP1 functions as a molecular switch to regulate epithelial-mesenchymal transition. Unphosphorylated MCRIP1 binds to and inhibits the transcriptional corepressor CTBP(s). When phosphorylated by MAPK/ERK, MCRIP1 releases CTBP(s) resulting in transcriptional silencing of the E-cadherin gene and induction of epithelial-mesenchymal transition. The protein is Mapk-regulated corepressor-interacting protein 1 of Homo sapiens (Human).